Reading from the N-terminus, the 352-residue chain is Decapping nuclease din1 (352 aa).

Residues R33 and 93–95 (WRG) each bind substrate. Residue E150 coordinates a divalent metal cation. Residues C182 and E199 each coordinate substrate. D201 provides a ligand contact to a divalent metal cation. At S218 the chain carries Phosphoserine. E239 and L240 together coordinate a divalent metal cation. Substrate is bound by residues K241 and Q263.

The protein belongs to the DXO/Dom3Z family. As to quaternary structure, interacts with dhp1/Rat1; the interaction is direct, stabilizes dhp1 protein structure and stimulates its exoribonuclease activity. The interaction also stimulates din1 pyrophosphohydrolase activity, probably by recruiting it to mRNA substrates. A divalent metal cation serves as cofactor.

Its subcellular location is the nucleus. The catalysed reaction is a 5'-end NAD(+)-phospho-ribonucleoside in mRNA + H2O = a 5'-end phospho-ribonucleoside in mRNA + NAD(+) + H(+). It catalyses the reaction a 5'-end (N(7)-methyl 5'-triphosphoguanosine)-ribonucleoside-ribonucleotide in mRNA + H2O = a (N(7)-methyl 5'-triphosphoguanosine)-nucleoside + a 5'-end phospho-ribonucleoside in mRNA + H(+). It carries out the reaction a 5'-end triphospho-ribonucleoside in mRNA + H2O = a 5'-end phospho-ribonucleoside in mRNA + diphosphate + H(+). Functionally, decapping enzyme for NAD-capped RNAs: specifically hydrolyzes the nicotinamide adenine dinucleotide (NAD) cap from a subset of RNAs by removing the entire NAD moiety from the 5'-end of an NAD-capped RNA. The NAD-cap is present at the 5'-end of some RNAs and snoRNAs. In contrast to the canonical 5'-end N7 methylguanosine (m7G) cap, the NAD cap promotes mRNA decay. Also acts as a non-canonical decapping enzyme that removes the entire cap structure of m7G capped or incompletely capped RNAs and mediates their subsequent degradation. Specifically degrades pre-mRNAs with a defective m7G cap and is part of a pre-mRNA capping quality control. Has decapping activity toward incomplete 5'-end m7G cap mRNAs such as unmethylated 5'-end-capped RNA (cap0), while it has no activity toward 2'-O-ribose methylated m7G cap (cap1). Also possesses RNA 5'-pyrophosphohydrolase activity by hydrolyzing the 5'-end triphosphate to release pyrophosphates. Stimulates exoribonuclease activity of dhp1, allowing it to degrade RNAs with stable secondary structure more effectively. The chain is Decapping nuclease din1 from Schizosaccharomyces pombe (strain 972 / ATCC 24843) (Fission yeast).